The primary structure comprises 366 residues: MDFLNSSDQNLTSEELLHRMPSKILVSLTLSGLALMTTTINSLVIAAIIVTRKLHHPANYLICSLAVTDFLVAVLVMPFSIVYIVRESWIMGQVLCDIWLSVDIICCTCSILHLSAIALDRYRAITDAVEYARKRTPKQAGIMITIVWIISVFISMPPLFWRHQGTSRDDECIIKHDHIVSTIYSTFGAFYIPLVLILILYYKIYKAAKTLYHKRQASRIAKEELNGQVLLESGEKSIKMVSTTYVPEKSLSDPSTDFDKIHNTVKSPRCKLRHEKSWRRQKISGTRERKAATTLGLILGAFVICWLPFFVKELVVNVCEKCKISEEMANFLAWLGYLNSLINPLIYTIFNEDFKKAFQKLVRCQY.

Residues 1-24 (MDFLNSSDQNLTSEELLHRMPSKI) are Extracellular-facing. N-linked (GlcNAc...) asparagine glycans are attached at residues asparagine 5 and asparagine 10. A helical membrane pass occupies residues 25–49 (LVSLTLSGLALMTTTINSLVIAAII). Topologically, residues 50–59 (VTRKLHHPAN) are cytoplasmic. A helical transmembrane segment spans residues 60–81 (YLICSLAVTDFLVAVLVMPFSI). Residues 82 to 96 (VYIVRESWIMGQVLC) lie on the Extracellular side of the membrane. A disulfide bridge links cysteine 96 with cysteine 172. Residues 97–119 (DIWLSVDIICCTCSILHLSAIAL) form a helical membrane-spanning segment. Serotonin is bound by residues aspartate 103 and cysteine 107. Positions 120–122 (DRY) match the DRY motif; important for ligand-induced conformation changes motif. At 120 to 139 (DRYRAITDAVEYARKRTPKQ) the chain is on the cytoplasmic side. The helical transmembrane segment at 140 to 159 (AGIMITIVWIISVFISMPPL) threads the bilayer. Residues 160–178 (FWRHQGTSRDDECIIKHDH) are Extracellular-facing. The helical transmembrane segment at 179-202 (IVSTIYSTFGAFYIPLVLILILYY) threads the bilayer. At 203–291 (KIYKAAKTLY…KISGTRERKA (89 aa)) the chain is on the cytoplasmic side. The helical transmembrane segment at 292–315 (ATTLGLILGAFVICWLPFFVKELV) threads the bilayer. Residues 316-327 (VNVCEKCKISEE) lie on the Extracellular side of the membrane. A helical transmembrane segment spans residues 328–350 (MANFLAWLGYLNSLINPLIYTIF). Residues 343–347 (NPLIY) carry the NPxxY motif; important for ligand-induced conformation changes and signaling motif. Topologically, residues 351-366 (NEDFKKAFQKLVRCQY) are cytoplasmic.

The protein belongs to the G-protein coupled receptor 1 family.

Its subcellular location is the cell membrane. In terms of biological role, G-protein coupled receptor for 5-hydroxytryptamine (serotonin). Also functions as a receptor for various alkaloids and psychoactive substances. Ligand binding causes a conformation change that triggers signaling via guanine nucleotide-binding proteins (G proteins) and modulates the activity of downstream effectors, such as adenylate cyclase. HTR1F is coupled to G(i)/G(o) G alpha proteins and mediates inhibitory neurotransmission by inhibiting adenylate cyclase activity. The protein is 5-hydroxytryptamine receptor 1F (HTR1F) of Cavia porcellus (Guinea pig).